The sequence spans 751 residues: Photosystem I P700 chlorophyll a apoprotein A1 (751 aa).

8 consecutive transmembrane segments (helical) span residues 73–96, 159–182, 198–222, 294–312, 349–372, 388–414, 436–458, and 533–551; these read VFSAHFGQLGIILIWLSGMYFHGA, LYTTAVVGLVLAGAMFFAGWFHYH, LNHHLGGLLGLGSLGWAGHQIHVSL, TAHHHLAIAVLFLIAGHMY, WHAQLAINLALFGSLSIVVAHHMY, LSLFTHHCWIGGFCIVGAGAHAAIFMV, AIISHLNWVSIFLGFHSFGLYIH, and FMVHHIHAFTIHVTVLILL. Positions 575 and 584 each coordinate [4Fe-4S] cluster. 2 helical membrane-spanning segments follow: residues 591-612 and 665-687; these read HVFLGLFWMYNSLSIVIFHFSW and LSAYGLIFLGAHFILLTGMLDIF. His676 contacts chlorophyll a'. The chlorophyll a site is built by Met683 and Tyr692. Trp693 lines the phylloquinone pocket. Residues 725–745 form a helical membrane-spanning segment; the sequence is AVGVAHYLLGGIATTWSFFLA.

It belongs to the PsaA/PsaB family. The PsaA/B heterodimer binds the P700 chlorophyll special pair and subsequent electron acceptors. PSI consists of a core antenna complex that captures photons, and an electron transfer chain that converts photonic excitation into a charge separation. The eukaryotic PSI reaction center is composed of at least 11 subunits. Requires P700 is a chlorophyll a/chlorophyll a' dimer, A0 is one or more chlorophyll a, A1 is one or both phylloquinones and FX is a shared 4Fe-4S iron-sulfur center. as cofactor.

The protein resides in the plastid. It localises to the chloroplast thylakoid membrane. The enzyme catalyses reduced [plastocyanin] + hnu + oxidized [2Fe-2S]-[ferredoxin] = oxidized [plastocyanin] + reduced [2Fe-2S]-[ferredoxin]. PsaA and PsaB bind P700, the primary electron donor of photosystem I (PSI), as well as the electron acceptors A0, A1 and FX. PSI is a plastocyanin/cytochrome c6-ferredoxin oxidoreductase, converting photonic excitation into a charge separation, which transfers an electron from the donor P700 chlorophyll pair to the spectroscopically characterized acceptors A0, A1, FX, FA and FB in turn. Oxidized P700 is reduced on the lumenal side of the thylakoid membrane by plastocyanin or cytochrome c6. The chain is Photosystem I P700 chlorophyll a apoprotein A1 from Stigeoclonium helveticum (Green alga).